The following is an 86-amino-acid chain: Small ribosomal subunit protein bS16 (86 aa).

Belongs to the bacterial ribosomal protein bS16 family.

The protein is Small ribosomal subunit protein bS16 of Acidithiobacillus ferrooxidans (strain ATCC 23270 / DSM 14882 / CIP 104768 / NCIMB 8455) (Ferrobacillus ferrooxidans (strain ATCC 23270)).